Reading from the N-terminus, the 387-residue chain is Erythronate-4-phosphate dehydrogenase (387 aa).

Substrate is bound by residues S45 and T67. An NAD(+)-binding site is contributed by D147. Residue R208 is part of the active site. D232 is an NAD(+) binding site. E237 is an active-site residue. H254 acts as the Proton donor in catalysis. G257 lines the NAD(+) pocket. Y258 is a binding site for substrate.

It belongs to the D-isomer specific 2-hydroxyacid dehydrogenase family. PdxB subfamily. As to quaternary structure, homodimer.

It localises to the cytoplasm. The catalysed reaction is 4-phospho-D-erythronate + NAD(+) = (R)-3-hydroxy-2-oxo-4-phosphooxybutanoate + NADH + H(+). Its pathway is cofactor biosynthesis; pyridoxine 5'-phosphate biosynthesis; pyridoxine 5'-phosphate from D-erythrose 4-phosphate: step 2/5. Functionally, catalyzes the oxidation of erythronate-4-phosphate to 3-hydroxy-2-oxo-4-phosphonooxybutanoate. In Shewanella woodyi (strain ATCC 51908 / MS32), this protein is Erythronate-4-phosphate dehydrogenase.